The following is a 351-amino-acid chain: Divinyl chlorophyll a/b light-harvesting protein PcbA (351 aa).

6 helical membrane-spanning segments follow: residues 27-47 (FIAA…AFTL), 64-84 (LIAL…GTFV), 89-109 (VTAI…GGLL), 202-222 (VMGG…FHIA), 242-262 (AILS…AFWC), and 305-325 (LTNV…WHAL).

Belongs to the PsbB/PsbC family. IsiA/Pcb subfamily. In terms of assembly, the antenna complex consists of divinyl chlorophylls (a and b) and divinyl chlorophyll a/b binding proteins and binds more divinyl chlorophyll b than does the antenna complex from high-light-adapted Prochlorococcus. Requires divinyl chlorophyll a as cofactor. Divinyl chlorophyll b is required as a cofactor.

It is found in the cellular thylakoid membrane. The antenna complex functions as a light receptor, it captures and delivers excitation energy to photosystems II and I. The Prochlorales pcb genes are not related to higher plant LHCs. This chain is Divinyl chlorophyll a/b light-harvesting protein PcbA (pcbA), found in Prochlorococcus marinus (strain SARG / CCMP1375 / SS120).